The sequence spans 104 residues: Vesicle-associated membrane protein 3 (104 aa).

A disordered region spans residues 1-23 (MTTNAPAGSSAAAGSSRRLQQTQ). The Cytoplasmic segment spans residues 1–81 (MTTNAPAGSS…KRKYWWKNCK (81 aa)). Residues 7–16 (AGSSAAAGSS) are compositionally biased toward low complexity. The region spanning 18-78 (RLQQTQNQVD…AKLKRKYWWK (61 aa)) is the v-SNARE coiled-coil homology domain. Glycyl lysine isopeptide (Lys-Gly) (interchain with G-Cter in ubiquitin) cross-links involve residues Lys70, Lys72, and Lys81. A helical; Anchor for type IV membrane protein membrane pass occupies residues 82–102 (MWAIGITVVVIIIIIIVVWSI). Residues 103 to 104 (SS) are Vesicular-facing.

Belongs to the synaptobrevin family. As to quaternary structure, interacts with POPDC1 (via the C-terminus cytoplasmic tail). Interacts with BCAP31; involved in VAMP3 export from the endoplasmic reticulum. Interacts with BAIAP3; this interaction is increased in the presence of calcium. Interacts with PICALM. Post-translationally, ubiquitinated by RNF167 at Lys-70, Lys-72 and Lys-81, regulating the recycling endosome pathway.

Its subcellular location is the early endosome membrane. The protein localises to the recycling endosome membrane. It localises to the synapse. It is found in the synaptosome. Functionally, SNARE involved in vesicular transport from the late endosomes to the trans-Golgi network. The polypeptide is Vesicle-associated membrane protein 3 (VAMP3) (Bos taurus (Bovine)).